The following is a 938-amino-acid chain: Isoleucine--tRNA ligase (938 aa).

The 'HIGH' region signature appears at Pro-58 to His-68. Residue Glu-561 coordinates L-isoleucyl-5'-AMP. The short motif at Lys-602 to Ser-606 is the 'KMSKS' region element. Lys-605 provides a ligand contact to ATP. Zn(2+) contacts are provided by Cys-901, Cys-904, Cys-921, and Cys-924.

Belongs to the class-I aminoacyl-tRNA synthetase family. IleS type 1 subfamily. As to quaternary structure, monomer. The cofactor is Zn(2+).

The protein localises to the cytoplasm. The enzyme catalyses tRNA(Ile) + L-isoleucine + ATP = L-isoleucyl-tRNA(Ile) + AMP + diphosphate. Its function is as follows. Catalyzes the attachment of isoleucine to tRNA(Ile). As IleRS can inadvertently accommodate and process structurally similar amino acids such as valine, to avoid such errors it has two additional distinct tRNA(Ile)-dependent editing activities. One activity is designated as 'pretransfer' editing and involves the hydrolysis of activated Val-AMP. The other activity is designated 'posttransfer' editing and involves deacylation of mischarged Val-tRNA(Ile). This chain is Isoleucine--tRNA ligase, found in Serratia proteamaculans (strain 568).